The sequence spans 143 residues: ATP synthase subunit 9, mitochondrial (143 aa).

The transit peptide at 1–62 (MAASRVFAQR…ARQAFAARRQ (62 aa)) directs the protein to the mitochondrion. The next 2 helical transmembrane spans lie at 85–105 (IGLG…LLAV) and 119–139 (AILG…VAMM).

The protein belongs to the ATPase C chain family. F-type ATPases have 2 components, CF(1) - the catalytic core - and CF(0) - the membrane proton channel. CF(1) has five subunits: alpha(3), beta(3), gamma(1), delta(1), epsilon(1). CF(0) has three main subunits: a, b and c.

Its subcellular location is the mitochondrion membrane. Functionally, mitochondrial membrane ATP synthase (F(1)F(0) ATP synthase or Complex V) produces ATP from ADP in the presence of a proton gradient across the membrane which is generated by electron transport complexes of the respiratory chain. F-type ATPases consist of two structural domains, F(1) - containing the extramembraneous catalytic core and F(0) - containing the membrane proton channel, linked together by a central stalk and a peripheral stalk. During catalysis, ATP synthesis in the catalytic domain of F(1) is coupled via a rotary mechanism of the central stalk subunits to proton translocation. Part of the complex F(0) domain. A homomeric c-ring of probably 10 subunits is part of the complex rotary element. The sequence is that of ATP synthase subunit 9, mitochondrial (atp9) from Emericella nidulans (strain FGSC A4 / ATCC 38163 / CBS 112.46 / NRRL 194 / M139) (Aspergillus nidulans).